Here is a 449-residue protein sequence, read N- to C-terminus: MRECISVHVGQAGVQIGNACWELFCLEHGIQADGTFGTQASKINDDDSFTTFFSETGNGKHVPRAVMVDLEPTVVDEVRAGTYRQLFHPEQLITGKEDAANNYARGHYTVGKESIDLVLDRIRKLTDACSGLQGFLIFHSFGGGTGSGFTSLLMERLSLDYGKKSKLEFAIYPAPQVSTAVVEPYNSILTTHTTLEHSDCAFMVDNEAIYDICRRNLDIERPTYTNLNRLISQIVSSITASLRFDGALNVDLTEFQTNLVPYPRIHFPLVTYAPIVSAEKAYHEQLSVAEITSSCFEPNSQMVKCDPRHGKYMACCMLYRGDVVPKDVNVAIAAIKTKRTIQFVDWCPTGFKVGINYQPPTVVPGGDLAKVQRAVCMLSNTTAIAEAWARLDHKFDLMYAKRAFVHWYVGEGMEEGEFSEAREDLAALEKDYEEVGTDSFEEENEGEEF.

The MREC motif motif lies at 1 to 4 (MREC). GTP contacts are provided by Gln11, Glu71, Ser140, Gly144, Thr145, Thr179, Asn206, and Asn228. Position 71 (Glu71) interacts with Mg(2+). Residue Glu254 is part of the active site.

This sequence belongs to the tubulin family. As to quaternary structure, dimer of alpha and beta chains. A typical microtubule is a hollow water-filled tube with an outer diameter of 25 nm and an inner diameter of 15 nM. Alpha-beta heterodimers associate head-to-tail to form protofilaments running lengthwise along the microtubule wall with the beta-tubulin subunit facing the microtubule plus end conferring a structural polarity. Microtubules usually have 13 protofilaments but different protofilament numbers can be found in some organisms and specialized cells. Mg(2+) serves as cofactor. Post-translationally, some glutamate residues at the C-terminus are polyglycylated, resulting in polyglycine chains on the gamma-carboxyl group. Glycylation is mainly limited to tubulin incorporated into axonemes (cilia and flagella) whereas glutamylation is prevalent in neuronal cells, centrioles, axonemes, and the mitotic spindle. Both modifications can coexist on the same protein on adjacent residues, and lowering polyglycylation levels increases polyglutamylation, and reciprocally. Cilia and flagella glycylation is required for their stability and maintenance. Flagella glycylation controls sperm motility. In terms of processing, some glutamate residues at the C-terminus are polyglutamylated, resulting in polyglutamate chains on the gamma-carboxyl group. Polyglutamylation plays a key role in microtubule severing by spastin (SPAST). SPAST preferentially recognizes and acts on microtubules decorated with short polyglutamate tails: severing activity by SPAST increases as the number of glutamates per tubulin rises from one to eight, but decreases beyond this glutamylation threshold. Glutamylation is also involved in cilia motility. The C-terminal phenylalanine residue is cleaved by MATCAP1/KIAA0895L.

It is found in the cytoplasm. The protein resides in the cytoskeleton. The enzyme catalyses GTP + H2O = GDP + phosphate + H(+). Functionally, tubulin is the major constituent of microtubules, a cylinder consisting of laterally associated linear protofilaments composed of alpha- and beta-tubulin heterodimers. Microtubules grow by the addition of GTP-tubulin dimers to the microtubule end, where a stabilizing cap forms. Below the cap, tubulin dimers are in GDP-bound state, owing to GTPase activity of alpha-tubulin. The protein is Tubulin alpha-8 chain (Tuba8) of Rattus norvegicus (Rat).